The chain runs to 81 residues: Cytotoxin I-like P-15 (81 aa).

Residues 1-21 form the signal peptide; it reads MKTLLLTLAAATIVCLDLGYT. 4 cysteine pairs are disulfide-bonded: cysteine 24/cysteine 42, cysteine 35/cysteine 59, cysteine 63/cysteine 74, and cysteine 75/cysteine 80.

It belongs to the three-finger toxin family. Short-chain subfamily. Type IA cytotoxin sub-subfamily. Monomer in solution; Homodimer and oligomer in the presence of negatively charged lipids forming a pore with a size ranging between 20 and 30 Angstroms. In terms of tissue distribution, expressed by the venom gland.

It localises to the secreted. Its subcellular location is the target cell membrane. Shows cytolytic activity on many different cells by forming pore in lipid membranes. In vivo, increases heart rate or kills the animal by cardiac arrest. In addition, it binds to heparin with high affinity, interacts with Kv channel-interacting protein 1 (KCNIP1) in a calcium-independent manner, and binds to integrin alpha-V/beta-3 (ITGAV/ITGB3) with moderate affinity. In Naja atra (Chinese cobra), this protein is Cytotoxin I-like P-15.